The chain runs to 380 residues: MFSRTDLEAREAATLCPYATLSRDTRGREYPEAESATRTAFQKDRDRVLHTTAFRRLEAKTQVFLNVSYSGHADHYRTRLTHTLEVQQVARSVALNLGLNETLAETIALTHDLGHPPFGHAGERVLNALMHDHGGFNHNTQARRIVTHLESRYPDFPGLNLTLDTLDGLNKHDRAGIGHASLEAQLVDAADALAYTAHDLDDGLRSGLITPAQLQELPLWRELLARVPGTPAPLTSRERRILHRELLGWLIRDLTQASAQAIAQSGVQTAAEARAYPERLMTYSGAMRDLLRSAGTFLREHLYRHWRVEMQVEQAERVLTTLFRAYTARPSLLPPAASARAEHSGLPRAVCDHIAGMTDRYALETHAAITPPGAPTSWPH.

The region spanning 79-196 (RLTHTLEVQQ…VDAADALAYT (118 aa)) is the HD domain.

Belongs to the dGTPase family. Type 2 subfamily.

This Deinococcus deserti (strain DSM 17065 / CIP 109153 / LMG 22923 / VCD115) protein is Deoxyguanosinetriphosphate triphosphohydrolase-like protein.